Here is a 478-residue protein sequence, read N- to C-terminus: Melanopsin (478 aa).

Pro residues predominate over residues M1 to T14. Residues M1–S32 form a disordered region. Residues M1–T72 are Extracellular-facing. The chain crosses the membrane as a helical span at residues L73–Y93. At T94–M107 the chain is on the cytoplasmic side. The chain crosses the membrane as a helical span at residues F108–F128. Residues T129 to E144 are Extracellular-facing. A disulfide bond links C143 and C221. The chain crosses the membrane as a helical span at residues F145–A165. Topologically, residues L166 to A188 are cytoplasmic. The helical transmembrane segment at F189–W209 threads the bilayer. Topologically, residues S210–L238 are extracellular. Residues L239 to F259 traverse the membrane as a helical segment. The Cytoplasmic portion of the chain corresponds to R260–K296. Residues I297 to L317 traverse the membrane as a helical segment. The Extracellular portion of the chain corresponds to V318 to S332. Residues S333–T353 traverse the membrane as a helical segment. K340 carries the post-translational modification N6-(retinylidene)lysine. At H354–M478 the chain is on the cytoplasmic side. A disordered region spans residues L440 to M478. Over residues L448–G465 the composition is skewed to basic and acidic residues.

This sequence belongs to the G-protein coupled receptor 1 family. Opsin subfamily. In terms of tissue distribution, expressed in the retina.

It is found in the cell membrane. The protein localises to the cell projection. The protein resides in the axon. It localises to the dendrite. Its subcellular location is the perikaryon. Photoreceptor that binds cis-retinaldehydes. Contributes to pupillar reflex, photoentrainment and other non-image forming responses to light. May be involved in the optokinetic visual tracking response. May be involved in the regulation of retinal hyaloid vessel growth and regression. The chain is Melanopsin (OPN4) from Homo sapiens (Human).